We begin with the raw amino-acid sequence, 192 residues long: Large ribosomal subunit protein uL18 (192 aa).

This sequence belongs to the universal ribosomal protein uL18 family. Part of the 50S ribosomal subunit. Contacts the 5S and 23S rRNAs.

In terms of biological role, this is one of the proteins that bind and probably mediate the attachment of the 5S RNA into the large ribosomal subunit, where it forms part of the central protuberance. This chain is Large ribosomal subunit protein uL18, found in Methanothermobacter thermautotrophicus (strain ATCC 29096 / DSM 1053 / JCM 10044 / NBRC 100330 / Delta H) (Methanobacterium thermoautotrophicum).